Here is a 398-residue protein sequence, read N- to C-terminus: NADH dehydrogenase [ubiquinone] iron-sulfur protein 2 (398 aa).

Positions 261, 267, and 282 each coordinate [4Fe-4S] cluster.

The protein belongs to the complex I 49 kDa subunit family. In terms of assembly, complex I is composed of about 45 different subunits. This is a component of the iron-sulfur (IP) fragment of the enzyme. [4Fe-4S] cluster is required as a cofactor.

It is found in the mitochondrion. It catalyses the reaction a ubiquinone + NADH + 5 H(+)(in) = a ubiquinol + NAD(+) + 4 H(+)(out). Functionally, core subunit of the mitochondrial membrane respiratory chain NADH dehydrogenase (Complex I) that is believed to belong to the minimal assembly required for catalysis. Complex I functions in the transfer of electrons from NADH to the respiratory chain. The immediate electron acceptor for the enzyme is believed to be ubiquinone. Component of the iron-sulfur (IP) fragment of the enzyme. The chain is NADH dehydrogenase [ubiquinone] iron-sulfur protein 2 (NAD7) from Nephroselmis olivacea (Green alga).